The primary structure comprises 91 residues: UPF0335 protein BBta_6866 (91 aa).

It belongs to the UPF0335 family.

The polypeptide is UPF0335 protein BBta_6866 (Bradyrhizobium sp. (strain BTAi1 / ATCC BAA-1182)).